Reading from the N-terminus, the 594-residue chain is A-type ATP synthase subunit A (594 aa).

236–243 (GPFGSGKT) is an ATP binding site.

This sequence belongs to the ATPase alpha/beta chains family. In terms of assembly, has multiple subunits with at least A(3), B(3), C, D, E, F, H, I and proteolipid K(x).

The protein resides in the cell membrane. It catalyses the reaction ATP + H2O + 4 H(+)(in) = ADP + phosphate + 5 H(+)(out). Component of the A-type ATP synthase that produces ATP from ADP in the presence of a proton gradient across the membrane. The A chain is the catalytic subunit. In Pyrobaculum neutrophilum (strain DSM 2338 / JCM 9278 / NBRC 100436 / V24Sta) (Thermoproteus neutrophilus), this protein is A-type ATP synthase subunit A.